The primary structure comprises 475 residues: Ribulose bisphosphate carboxylase large chain (475 aa).

A propeptide spanning residues Met-1 to Ser-2 is cleaved from the precursor. Residue Pro-3 is modified to N-acetylproline. Residue Lys-14 is modified to N6,N6,N6-trimethyllysine. The substrate site is built by Asn-123 and Thr-173. Lys-175 (proton acceptor) is an active-site residue. Lys-177 lines the substrate pocket. Residues Lys-201, Asp-203, and Glu-204 each contribute to the Mg(2+) site. Lys-201 carries the post-translational modification N6-carboxylysine. The active-site Proton acceptor is His-294. The substrate site is built by Arg-295, His-327, and Ser-379.

This sequence belongs to the RuBisCO large chain family. Type I subfamily. In terms of assembly, heterohexadecamer of 8 large chains and 8 small chains; disulfide-linked. The disulfide link is formed within the large subunit homodimers. Mg(2+) is required as a cofactor. The disulfide bond which can form in the large chain dimeric partners within the hexadecamer appears to be associated with oxidative stress and protein turnover.

It localises to the plastid. The protein localises to the chloroplast. It carries out the reaction 2 (2R)-3-phosphoglycerate + 2 H(+) = D-ribulose 1,5-bisphosphate + CO2 + H2O. The enzyme catalyses D-ribulose 1,5-bisphosphate + O2 = 2-phosphoglycolate + (2R)-3-phosphoglycerate + 2 H(+). Its function is as follows. RuBisCO catalyzes two reactions: the carboxylation of D-ribulose 1,5-bisphosphate, the primary event in carbon dioxide fixation, as well as the oxidative fragmentation of the pentose substrate in the photorespiration process. Both reactions occur simultaneously and in competition at the same active site. This Plumbago auriculata (Cape leadwort) protein is Ribulose bisphosphate carboxylase large chain.